A 212-amino-acid polypeptide reads, in one-letter code: Regulatory protein RecX (212 aa).

The protein belongs to the RecX family.

The protein localises to the cytoplasm. Its function is as follows. Modulates RecA activity. The polypeptide is Regulatory protein RecX (Clostridium perfringens (strain SM101 / Type A)).